We begin with the raw amino-acid sequence, 272 residues long: Acetylglutamate kinase (272 aa).

Substrate is bound by residues 46 to 47, Arg-68, and Asn-166; that span reads GA.

The protein belongs to the acetylglutamate kinase family. ArgB subfamily.

The protein resides in the cytoplasm. The catalysed reaction is N-acetyl-L-glutamate + ATP = N-acetyl-L-glutamyl 5-phosphate + ADP. It participates in amino-acid biosynthesis; L-arginine biosynthesis; N(2)-acetyl-L-ornithine from L-glutamate: step 2/4. In terms of biological role, catalyzes the ATP-dependent phosphorylation of N-acetyl-L-glutamate. This is Acetylglutamate kinase from Dehalococcoides mccartyi (strain ATCC BAA-2266 / KCTC 15142 / 195) (Dehalococcoides ethenogenes (strain 195)).